The sequence spans 119 residues: Amicyanin-alpha (119 aa).

The signal sequence occupies residues 1-20 (MRALAFAAALAAFSATAALA). The region spanning 21 to 119 (AGALEAVQEA…PFMKGKVVVE (99 aa)) is the Plastocyanin-like domain. Cu cation contacts are provided by His-67, Cys-106, His-109, and Met-112.

Cu cation serves as cofactor.

Its subcellular location is the periplasm. Its pathway is one-carbon metabolism; methylamine degradation. Primary acceptor of electrons from methylamine dehydrogenase. Passes those electrons on either a soluble cytochrome c or to pseudoazurin. The sequence is that of Amicyanin-alpha (mauC) from Methylorubrum extorquens (strain ATCC 14718 / DSM 1338 / JCM 2805 / NCIMB 9133 / AM1) (Methylobacterium extorquens).